A 126-amino-acid polypeptide reads, in one-letter code: Nucleoside diphosphate kinase B (126 aa).

ATP-binding residues include Lys6, Phe37, Thr68, Arg79, and Asn89. His92 (pros-phosphohistidine intermediate) is an active-site residue.

This sequence belongs to the NDK family. The cofactor is Mg(2+).

It localises to the cytoplasm. It is found in the nucleus. The protein localises to the cell projection. The protein resides in the lamellipodium. Its subcellular location is the ruffle. It catalyses the reaction a 2'-deoxyribonucleoside 5'-diphosphate + ATP = a 2'-deoxyribonucleoside 5'-triphosphate + ADP. It carries out the reaction a ribonucleoside 5'-diphosphate + ATP = a ribonucleoside 5'-triphosphate + ADP. Its function is as follows. Major role in the synthesis of nucleoside triphosphates other than ATP. The protein is Nucleoside diphosphate kinase B (nme2) of Macruronus magellanicus (Patagonian grenadier).